Here is a 550-residue protein sequence, read N- to C-terminus: Hydroxylamine reductase (550 aa).

Positions 3, 6, 18, and 25 each coordinate [2Fe-2S] cluster. Hybrid [4Fe-2O-2S] cluster contacts are provided by His249, Glu273, Cys317, Cys405, Cys433, Cys458, Glu492, and Lys494. A Cysteine persulfide modification is found at Cys405.

The protein belongs to the HCP family. Requires [2Fe-2S] cluster as cofactor. Hybrid [4Fe-2O-2S] cluster is required as a cofactor.

It localises to the cytoplasm. It catalyses the reaction A + NH4(+) + H2O = hydroxylamine + AH2 + H(+). Catalyzes the reduction of hydroxylamine to form NH(3) and H(2)O. This Salmonella dublin (strain CT_02021853) protein is Hydroxylamine reductase.